Reading from the N-terminus, the 813-residue chain is Probable receptor-like protein kinase At5g39020 (813 aa).

An N-terminal signal peptide occupies residues Met-1–Ala-21. The Extracellular portion of the chain corresponds to Ala-22–Val-437. N-linked (GlcNAc...) asparagine glycosylation is found at Asn-46, Asn-61, Asn-165, Asn-202, Asn-213, Asn-263, Asn-286, Asn-293, Asn-384, and Asn-401. A helical transmembrane segment spans residues Leu-438–Ile-458. Residues Met-459–Ile-813 lie on the Cytoplasmic side of the membrane. One can recognise a Protein kinase domain in the interval Lys-496–Leu-771. Residues Val-502 to Val-510 and Lys-524 each bind ATP. The active-site Proton acceptor is Asp-619. Residues Glu-791–Ile-813 form a disordered region. Residues Gln-804–Ile-813 are compositionally biased toward polar residues.

The protein belongs to the protein kinase superfamily. Ser/Thr protein kinase family.

Its subcellular location is the membrane. This Arabidopsis thaliana (Mouse-ear cress) protein is Probable receptor-like protein kinase At5g39020.